A 1135-amino-acid polypeptide reads, in one-letter code: Exportin-5 (1135 aa).

Positions 32–117 (SQVFLEEIKT…KEKLVTILVD (86 aa)) constitute an Importin N-terminal domain. The segment at 630-631 (TE) is pre-siRNA binding.

The protein belongs to the exportin family. In terms of assembly, found in a nuclear export complex with RanGTP, exportin and pre-miRNA.

Its subcellular location is the nucleus. The protein resides in the cytoplasm. Its function is as follows. Mediates the nuclear export of proteins bearing a double-stranded RNA binding domain (dsRBD) and double-stranded RNAs (cargos). In terms of biological role, mediates the nuclear export of micro-RNA precursors, which form short hairpins. The chain is Exportin-5 (xpo5) from Dictyostelium discoideum (Social amoeba).